The following is a 283-amino-acid chain: NAD kinase (283 aa).

Residue aspartate 68 is the Proton acceptor of the active site. NAD(+) contacts are provided by residues 68–69, 142–143, arginine 153, aspartate 172, 183–188, and glutamine 242; these read DG, ND, and TAYSLS.

It belongs to the NAD kinase family. Requires a divalent metal cation as cofactor.

Its subcellular location is the cytoplasm. The enzyme catalyses NAD(+) + ATP = ADP + NADP(+) + H(+). In terms of biological role, involved in the regulation of the intracellular balance of NAD and NADP, and is a key enzyme in the biosynthesis of NADP. Catalyzes specifically the phosphorylation on 2'-hydroxyl of the adenosine moiety of NAD to yield NADP. This chain is NAD kinase, found in Thermoanaerobacter pseudethanolicus (strain ATCC 33223 / 39E) (Clostridium thermohydrosulfuricum).